The following is a 211-amino-acid chain: Troponin I, cardiac muscle (211 aa).

The tract at residues 1-24 is disordered; it reads MADESSDAAGEPQPAPAPVRRRSS. Position 2 is an N-acetylalanine (alanine 2). A phosphoserine mark is found at serine 5 and serine 6. Phosphoserine; by PKA and PKD/PRKD1 occurs at positions 23 and 24. Tyrosine 27 bears the Phosphotyrosine mark. Threonine 32 is subject to Phosphothreonine; by STK4/MST1. Residues 33-80 are involved in binding TNC; the sequence is EPHAKKKSKISASRKLQLKTLMLQIAKQEMEREAEERRGEKGRVLRTR. 2 positions are modified to phosphoserine; by PKC/PRKCE: serine 43 and serine 45. Threonine 52 is subject to Phosphothreonine; by STK4/MST1. Threonine 79 is subject to Phosphothreonine. Residues threonine 130 and threonine 144 each carry the phosphothreonine; by STK4/MST1 modification. An involved in binding TNC and actin region spans residues 130-151; sequence TQKIYDLRGKFKRPTLRRVRIS. Residues serine 151, serine 167, and serine 200 each carry the phosphoserine modification.

Belongs to the troponin I family. Interacts with TRIM63. Binds to actin and tropomyosin. Interacts with STK4/MST1. Phosphorylated at Ser-23 and Ser-24 by PRKD1; phosphorylation reduces myofilament calcium sensitivity. Phosphorylated preferentially at Thr-32. Phosphorylation by STK4/MST1 alters its binding affinity to TNNC1 (cardiac Tn-C) and TNNT2 (cardiac Tn-T). Phosphorylated at Ser-43 and Ser-45 by PRKCE; phosphorylation increases myocardium contractile dysfunction.

Troponin I is the inhibitory subunit of troponin, the thin filament regulatory complex which confers calcium-sensitivity to striated muscle actomyosin ATPase activity. This chain is Troponin I, cardiac muscle (Tnni3), found in Mus musculus (Mouse).